Reading from the N-terminus, the 263-residue chain is Undecaprenyl-diphosphatase (263 aa).

Helical transmembrane passes span P40–F60, L87–V107, A109–F129, F186–W206, A219–V239, and R243–S263.

Belongs to the UppP family.

It localises to the cell inner membrane. The enzyme catalyses di-trans,octa-cis-undecaprenyl diphosphate + H2O = di-trans,octa-cis-undecaprenyl phosphate + phosphate + H(+). Catalyzes the dephosphorylation of undecaprenyl diphosphate (UPP). Confers resistance to bacitracin. In Syntrophotalea carbinolica (strain DSM 2380 / NBRC 103641 / GraBd1) (Pelobacter carbinolicus), this protein is Undecaprenyl-diphosphatase.